Consider the following 1414-residue polypeptide: Phenyloxazoline synthase MbtB (1414 aa).

Residues 5–78 enclose the Carrier 1 domain; it reads TACSEIIRAE…AWSQLVSAGT (74 aa). Serine 39 carries the post-translational modification O-(pantetheine 4'-phosphoryl)serine. The segment at 96–394 is condensation/cyclization; that stretch reads EGEPFPVAPM…SSLLLDVDLT (299 aa). An adenylation region spans residues 579-975; that stretch reads SYAQLRDQAS…RLPGVHAAAA (397 aa). The region spanning 1057 to 1135 is the Carrier 2 domain; it reads APRTVLQRAL…ALAQLLTGRE (79 aa). Serine 1094 is subject to O-(pantetheine 4'-phosphoryl)serine. Positions 1188-1413 are thioesterase; the sequence is GAVLVFPHAG…AVARMVSADV (226 aa).

Belongs to the ATP-dependent AMP-binding enzyme family. MbtB subfamily. The cofactor is pantetheine 4'-phosphate. In terms of processing, 4'-phosphopantetheine is transferred from CoA to a specific serine in each of the two carrier protein domains, leading to their activation from apo to holo forms.

It functions in the pathway siderophore biosynthesis; mycobactin biosynthesis. Its function is as follows. Involved in the initial steps of the mycobactin biosynthetic pathway. Putatively couples activated salicylic acid with serine or threonine and cyclizes this precursor to the hydroxyphenyloxazoline ring system present in this class of siderophores. Essential for growth in macrophages. The chain is Phenyloxazoline synthase MbtB (mbtB) from Mycobacterium tuberculosis (strain CDC 1551 / Oshkosh).